Here is a 994-residue protein sequence, read N- to C-terminus: Glycine dehydrogenase (decarboxylating) (994 aa).

The disordered stretch occupies residues 1–20; the sequence is MTDHAENRCGLEGPRPFSSR. Position 716 is an N6-(pyridoxal phosphate)lysine (K716).

It belongs to the GcvP family. As to quaternary structure, the glycine cleavage system is composed of four proteins: P, T, L and H. The cofactor is pyridoxal 5'-phosphate.

It carries out the reaction N(6)-[(R)-lipoyl]-L-lysyl-[glycine-cleavage complex H protein] + glycine + H(+) = N(6)-[(R)-S(8)-aminomethyldihydrolipoyl]-L-lysyl-[glycine-cleavage complex H protein] + CO2. The glycine cleavage system catalyzes the degradation of glycine. The P protein binds the alpha-amino group of glycine through its pyridoxal phosphate cofactor; CO(2) is released and the remaining methylamine moiety is then transferred to the lipoamide cofactor of the H protein. In Cutibacterium acnes (strain DSM 16379 / KPA171202) (Propionibacterium acnes), this protein is Glycine dehydrogenase (decarboxylating).